The following is a 90-amino-acid chain: Small ribosomal subunit protein bS16 (90 aa).

This sequence belongs to the bacterial ribosomal protein bS16 family.

This is Small ribosomal subunit protein bS16 from Lactobacillus gasseri (strain ATCC 33323 / DSM 20243 / BCRC 14619 / CIP 102991 / JCM 1131 / KCTC 3163 / NCIMB 11718 / NCTC 13722 / AM63).